A 260-amino-acid chain; its full sequence is Thiazole synthase (260 aa).

K96 (schiff-base intermediate with DXP) is an active-site residue. 1-deoxy-D-xylulose 5-phosphate-binding positions include G157, 184-185 (AG), and 206-207 (NT).

This sequence belongs to the ThiG family. Homotetramer. Forms heterodimers with either ThiH or ThiS.

Its subcellular location is the cytoplasm. The catalysed reaction is [ThiS sulfur-carrier protein]-C-terminal-Gly-aminoethanethioate + 2-iminoacetate + 1-deoxy-D-xylulose 5-phosphate = [ThiS sulfur-carrier protein]-C-terminal Gly-Gly + 2-[(2R,5Z)-2-carboxy-4-methylthiazol-5(2H)-ylidene]ethyl phosphate + 2 H2O + H(+). The protein operates within cofactor biosynthesis; thiamine diphosphate biosynthesis. In terms of biological role, catalyzes the rearrangement of 1-deoxy-D-xylulose 5-phosphate (DXP) to produce the thiazole phosphate moiety of thiamine. Sulfur is provided by the thiocarboxylate moiety of the carrier protein ThiS. In vitro, sulfur can be provided by H(2)S. The protein is Thiazole synthase of Rhodopseudomonas palustris (strain HaA2).